A 381-amino-acid polypeptide reads, in one-letter code: 3-dehydroquinate synthase (381 aa).

NAD(+)-binding positions include Glu81–Lys86, Gly115–Asp119, Thr139–Ser140, Lys152, and Lys161. Zn(2+) contacts are provided by Glu194, His256, and His274.

The protein belongs to the sugar phosphate cyclases superfamily. Dehydroquinate synthase family. Requires Co(2+) as cofactor. The cofactor is Zn(2+). NAD(+) is required as a cofactor.

The protein localises to the cytoplasm. The enzyme catalyses 7-phospho-2-dehydro-3-deoxy-D-arabino-heptonate = 3-dehydroquinate + phosphate. It functions in the pathway metabolic intermediate biosynthesis; chorismate biosynthesis; chorismate from D-erythrose 4-phosphate and phosphoenolpyruvate: step 2/7. Its function is as follows. Catalyzes the conversion of 3-deoxy-D-arabino-heptulosonate 7-phosphate (DAHP) to dehydroquinate (DHQ). The protein is 3-dehydroquinate synthase of Rhodopseudomonas palustris (strain BisA53).